A 58-amino-acid chain; its full sequence is uncharacterized protein (58 aa).

A helical membrane pass occupies residues Leu24–Leu44.

It is found in the membrane. This is an uncharacterized protein from Haemophilus influenzae (strain ATCC 51907 / DSM 11121 / KW20 / Rd).